A 605-amino-acid polypeptide reads, in one-letter code: DNA mismatch repair protein MutL (605 aa).

The protein belongs to the DNA mismatch repair MutL/HexB family.

Functionally, this protein is involved in the repair of mismatches in DNA. It is required for dam-dependent methyl-directed DNA mismatch repair. May act as a 'molecular matchmaker', a protein that promotes the formation of a stable complex between two or more DNA-binding proteins in an ATP-dependent manner without itself being part of a final effector complex. The protein is DNA mismatch repair protein MutL of Exiguobacterium sp. (strain ATCC BAA-1283 / AT1b).